Here is a 423-residue protein sequence, read N- to C-terminus: MTESVLDYMTRLGRAAREASRVIGRASTAQKNRALQAAAAALDAARDALTAANEQDLANGRKNGLEPALLDRLALTPARIDGMITGLRQVASLPDPVGAIRDMSYRPSGIQVGKMRVPLGVIGIIYESRPNVTIDAASLCLKSGNATILRGGSEAIHSNRAIATCIQRGLAEAGLPPAVVQVVETTDREAVGALISMPEYVDVIVPRGGRGLIERISRDARVPVIKHLDGICHIFVDEHADLDKAWRVAFNAKTYRYGICGAMETLLVDQRVAERFLPEMARRFQEKGVELRGCERTRAIIDSKPASEDDWHTEYLDAILSIRIVDGLEQAIEHINHYGSHHTDSIITEHQGQARRFMAEVDSASVMLNTPTCFADGFEYGLGAEIGISTDKLHARGPVGLEGLTCEKYVVIGDGQLRGQEPC.

The protein belongs to the gamma-glutamyl phosphate reductase family.

The protein localises to the cytoplasm. The catalysed reaction is L-glutamate 5-semialdehyde + phosphate + NADP(+) = L-glutamyl 5-phosphate + NADPH + H(+). It participates in amino-acid biosynthesis; L-proline biosynthesis; L-glutamate 5-semialdehyde from L-glutamate: step 2/2. Functionally, catalyzes the NADPH-dependent reduction of L-glutamate 5-phosphate into L-glutamate 5-semialdehyde and phosphate. The product spontaneously undergoes cyclization to form 1-pyrroline-5-carboxylate. This Pseudomonas entomophila (strain L48) protein is Gamma-glutamyl phosphate reductase.